Reading from the N-terminus, the 509-residue chain is MEEIHRYLQPDSSQQHNFLYPLIFQEYIYALAQDHGLNRNRSILLENSGYNNKLSFLIVKRLITRMYQQNHFIISTNDSNKNPFLGCNKSLYSQMISEGFACIVEIPFSIRLISSLSSFEGKKIFKSHNLRSIHSTFPFLEDNFAHLNYVLDILIPYPVHLEILVQTLRYWVKDASSLHLLRFFLHEYCNLNSLITSKKPGYSFSKKNQRFFFFLYNSYVYECESTFVFLRNQSSHLRSTSFGALLERIYFYGKIERLVEVFAKDFQVTLWLFKDPFMHYVRYEGKSILASKGTFPLMNKWKFYLVNFWQCHFSMYFHTGRIHINQLSNHSRDFMGYLSSVRLNHSMVRSQMLENSFLINNPIKKFETLVPIIPLIGSLAKAHFCTVLGHPISKPVWSDLSDSDIIDRFGRICRNLFHYYSGSSKKKTLYRIKYILRLSCARTLARKHKSTVRTFLKRSGSELLEEFLTSEEQVLSLTFPRASSSLWGVYRSRIWYLDIFCINDLANYQ.

The protein belongs to the intron maturase 2 family. MatK subfamily.

Its subcellular location is the plastid. It localises to the chloroplast. Usually encoded in the trnK tRNA gene intron. Probably assists in splicing its own and other chloroplast group II introns. The sequence is that of Maturase K from Solanum tuberosum (Potato).